The primary structure comprises 470 residues: Nuclear receptor ROR-beta (470 aa).

A DNA-binding region (nuclear receptor) is located at residues 18–93 (VIPCKICGDK…LGMSRDAVKF (76 aa)). 2 consecutive NR C4-type zinc fingers follow at residues 21 to 41 (CKIC…CEGC) and 57 to 81 (CPRQ…LQKC). Residues 104 to 117 (LYAEVQKHQQRLQE) are compositionally biased toward basic and acidic residues. The tract at residues 104–127 (LYAEVQKHQQRLQEQRQQQSGEAE) is disordered. The region spanning 222-460 (EIDRIAQNII…TLFPPLYKEL (239 aa)) is the NR LBD domain. Positions 456 to 461 (LYKELF) match the AF-2 motif.

Belongs to the nuclear hormone receptor family. NR1 subfamily. In terms of assembly, monomer. Interacts with CRX. Expressed in inner and outer neuroblastic layer as well as in the ganglion cell layer of the developing retina. Expressed in bone marrow osteoprogenitor cells.

It localises to the nucleus. Its subcellular location is the nucleoplasm. Its function is as follows. Nuclear receptor that binds DNA as a monomer to ROR response elements (RORE) containing a single core motif half-site 5'-AGGTCA-3' preceded by a short A-T-rich sequence. Considered to have intrinsic transcriptional activity, have some natural ligands such as all-trans retinoic acid (ATRA) and other retinoids which act as inverse agonists repressing the transcriptional activity. Required for normal postnatal development of rod and cone photoreceptor cells. Modulates rod photoreceptors differentiation at least by inducing the transcription factor NRL-mediated pathway. In cone photoreceptor cells, regulates transcription of OPN1SW. Involved in the regulation of the period length and stability of the circadian rhythm. May control cytoarchitectural patterning of neocortical neurons during development. May act in a dose-dependent manner to regulate barrel formation upon innervation of layer IV neurons by thalamocortical axons. May play a role in the suppression of osteoblastic differentiation through the inhibition of RUNX2 transcriptional activity. Functionally, isoform 1 is critical for hindlimb motor control and for the differentiation of amacrine and horizontal cells in the retina. Regulates the expression of PTF1A synergistically with FOXN4. The chain is Nuclear receptor ROR-beta (Rorb) from Mus musculus (Mouse).